The chain runs to 128 residues: MTRVKRGYIARRRRKKIRFFASSFRGAHSRLTRTIAQQKIRALVSAHRDRDRQKRDFRRLWITRINAAIRERGVYYNYSKFIHDLYKRQLLLNRKILAQIAILNPNCIYMIYNEIIKKEDCKKYLEII.

Belongs to the bacterial ribosomal protein bL20 family. As to quaternary structure, component of the chloroplast large ribosomal subunit (LSU). Mature 70S chloroplast ribosomes of higher plants consist of a small (30S) and a large (50S) subunit. The 30S small subunit contains 1 molecule of ribosomal RNA (16S rRNA) and 24 different proteins. The 50S large subunit contains 3 rRNA molecules (23S, 5S and 4.5S rRNA) and 33 different proteins.

It localises to the plastid. Its subcellular location is the chloroplast. Its function is as follows. Component of the chloroplast ribosome (chloro-ribosome), a dedicated translation machinery responsible for the synthesis of chloroplast genome-encoded proteins, including proteins of the transcription and translation machinery and components of the photosynthetic apparatus. This Spinacia oleracea (Spinach) protein is Large ribosomal subunit protein bL20c (rpl20).